A 159-amino-acid chain; its full sequence is Putative pre-16S rRNA nuclease (159 aa).

This sequence belongs to the YqgF nuclease family.

It localises to the cytoplasm. Could be a nuclease involved in processing of the 5'-end of pre-16S rRNA. The polypeptide is Putative pre-16S rRNA nuclease (Agrobacterium fabrum (strain C58 / ATCC 33970) (Agrobacterium tumefaciens (strain C58))).